The chain runs to 343 residues: Endoglucanase C (343 aa).

Glu140 acts as the Proton donor in catalysis. Glu280 (nucleophile) is an active-site residue.

The protein belongs to the glycosyl hydrolase 5 (cellulase A) family.

The catalysed reaction is Endohydrolysis of (1-&gt;4)-beta-D-glucosidic linkages in cellulose, lichenin and cereal beta-D-glucans.. It participates in glycan metabolism; cellulose degradation. Functionally, this enzyme catalyzes the endohydrolysis of 1,4-beta-glucosidic linkages in cellulose, lichenin and cereal beta-D-glucans. The sequence is that of Endoglucanase C (celC) from Acetivibrio thermocellus (strain ATCC 27405 / DSM 1237 / JCM 9322 / NBRC 103400 / NCIMB 10682 / NRRL B-4536 / VPI 7372) (Clostridium thermocellum).